The following is a 233-amino-acid chain: Probable cyclic nucleotide phosphodiesterase COSY_0614 (233 aa).

Positions 10, 12, 48, 78, 144, 183, and 185 each coordinate Fe cation. AMP is bound by residues H12, D48, and 78-79 (NH). H185 lines the AMP pocket.

It belongs to the cyclic nucleotide phosphodiesterase class-III family. Requires Fe(2+) as cofactor.

This chain is Probable cyclic nucleotide phosphodiesterase COSY_0614, found in Vesicomyosocius okutanii subsp. Calyptogena okutanii (strain HA).